We begin with the raw amino-acid sequence, 313 residues long: Testis-expressed protein 264 (313 aa).

Over 1–6 the chain is Lumenal; sequence MSDLLL. The chain crosses the membrane as a helical; Signal-anchor for type III membrane protein span at residues 7–31; that stretch reads LGLIGGLTLLLLLTLLAFAGYSGLL. Topologically, residues 32 to 313 are cytoplasmic; that stretch reads AGVEVSAGSP…EPTAPEKGKE (282 aa). The disordered stretch occupies residues 193–313; sequence PEMKETEWKW…EPTAPEKGKE (121 aa). Polar residues predominate over residues 219–247; the sequence is DTMSDTSSVSLEVSPGSRETSAATLSPGA. A phosphoserine mark is found at Ser-239 and Ser-244. Residues 251–263 are compositionally biased toward basic and acidic residues; that stretch reads GWDDGDTRSEHSY. The segment covering 264 to 273 has biased composition (low complexity); it reads SESGASGSSF. An LIR motif motif is present at residues 273-276; the sequence is FEEL.

In terms of assembly, interacts (via the LIR motif) with ATG8 family proteins MAP1LC3A, MAP1LC3B, GABARAP and GABARAPL1. Interacts with VCP/p97; bridging VCP/p97 to covalent DNA-protein cross-links (DPCs). Interacts with TOP1 (when sumoylated).

Its subcellular location is the endoplasmic reticulum membrane. The protein localises to the cytoplasmic vesicle. It localises to the autophagosome. The protein resides in the cytoplasm. It is found in the cytosol. Its subcellular location is the nucleus. The protein localises to the chromosome. In terms of biological role, major reticulophagy (also called ER-phagy) receptor that acts independently of other candidate reticulophagy receptors to remodel subdomains of the endoplasmic reticulum into autophagosomes upon nutrient stress, which then fuse with lysosomes for endoplasmic reticulum turnover. The ATG8-containing isolation membrane (IM) cradles a tubular segment of TEX264-positive ER near a three-way junction, allowing the formation of a synapse of 2 juxtaposed membranes with trans interaction between the TEX264 and ATG8 proteins. Expansion of the IM would extend the capture of ER, possibly through a 'zipper-like' process involving continued trans TEX264-ATG8 interactions, until poorly understood mechanisms lead to the fission of relevant membranes and, ultimately, autophagosomal membrane closure. Also involved in the repair of covalent DNA-protein cross-links (DPCs) during DNA synthesis: acts by bridging VCP/p97 to covalent DNA-protein cross-links (DPCs) and initiating resolution of DPCs by SPRTN. The chain is Testis-expressed protein 264 from Homo sapiens (Human).